The following is a 388-amino-acid chain: Succinate--CoA ligase [ADP-forming] subunit beta (388 aa).

An ATP-grasp domain is found at 9–246 (KDILRQFGVP…FEEEDPAEVL (238 aa)). ATP-binding positions include K46, 53 to 55 (GRG), E99, A102, and E107. Mg(2+) is bound by residues N201 and D215. Substrate contacts are provided by residues N266 and 323–325 (GIM).

The protein belongs to the succinate/malate CoA ligase beta subunit family. In terms of assembly, heterotetramer of two alpha and two beta subunits. The cofactor is Mg(2+).

It carries out the reaction succinate + ATP + CoA = succinyl-CoA + ADP + phosphate. The catalysed reaction is GTP + succinate + CoA = succinyl-CoA + GDP + phosphate. The protein operates within carbohydrate metabolism; tricarboxylic acid cycle; succinate from succinyl-CoA (ligase route): step 1/1. Functionally, succinyl-CoA synthetase functions in the citric acid cycle (TCA), coupling the hydrolysis of succinyl-CoA to the synthesis of either ATP or GTP and thus represents the only step of substrate-level phosphorylation in the TCA. The beta subunit provides nucleotide specificity of the enzyme and binds the substrate succinate, while the binding sites for coenzyme A and phosphate are found in the alpha subunit. The chain is Succinate--CoA ligase [ADP-forming] subunit beta from Verminephrobacter eiseniae (strain EF01-2).